The primary structure comprises 382 residues: MIQFIRPKTASGKTIVVQLSASPPQTPPPTDTNALKNWLEILSQRIINGDRLTKTEALTLTQIDGQDNILLLCEAADRIRQACCGNVVDLCSIINVKSGNCSENCQFCSQSVHHQGENSPIYGLKSSEEILAQAKAAEVAGAKRFCLVSQGRGPKYNSPQSGEFEKILETVRQITTETNIKPCCALGEVTLEQAEALKEAGVTRYNHNLEASENYYQSIVSTHSWGDRVETVKNLKKAGIQACTGGIMGMGETWEDRVDLAISLRELEVDSVPINLLNPREGTPLGHLPKLDVFDALKAIAIFRFLLPEQILRYAGGREAVMGELQSLGLKSGINAMLIGHYLTTLGQPPENDHAMLESLGLQGGEAPIPGEYKKKTQKKAH.

The Radical SAM core domain maps to Cys83 to Arg318. Cys101, Cys105, and Cys108 together coordinate [4Fe-4S] cluster. The [2Fe-2S] cluster site is built by Cys146, Cys183, Cys243, and Arg313.

This sequence belongs to the radical SAM superfamily. Biotin synthase family. As to quaternary structure, homodimer. [4Fe-4S] cluster is required as a cofactor. Requires [2Fe-2S] cluster as cofactor.

The catalysed reaction is (4R,5S)-dethiobiotin + (sulfur carrier)-SH + 2 reduced [2Fe-2S]-[ferredoxin] + 2 S-adenosyl-L-methionine = (sulfur carrier)-H + biotin + 2 5'-deoxyadenosine + 2 L-methionine + 2 oxidized [2Fe-2S]-[ferredoxin]. It functions in the pathway cofactor biosynthesis; biotin biosynthesis; biotin from 7,8-diaminononanoate: step 2/2. Catalyzes the conversion of dethiobiotin (DTB) to biotin by the insertion of a sulfur atom into dethiobiotin via a radical-based mechanism. This is Biotin synthase from Crocosphaera subtropica (strain ATCC 51142 / BH68) (Cyanothece sp. (strain ATCC 51142)).